The primary structure comprises 210 residues: Thiamine-phosphate synthase (210 aa).

4-amino-2-methyl-5-(diphosphooxymethyl)pyrimidine contacts are provided by residues 39–43 (QLREK) and asparagine 71. Residues aspartate 72 and aspartate 91 each contribute to the Mg(2+) site. Serine 110 provides a ligand contact to 4-amino-2-methyl-5-(diphosphooxymethyl)pyrimidine. 134 to 136 (TPT) is a 2-[(2R,5Z)-2-carboxy-4-methylthiazol-5(2H)-ylidene]ethyl phosphate binding site. Lysine 137 serves as a coordination point for 4-amino-2-methyl-5-(diphosphooxymethyl)pyrimidine. Glycine 163 is a binding site for 2-[(2R,5Z)-2-carboxy-4-methylthiazol-5(2H)-ylidene]ethyl phosphate.

This sequence belongs to the thiamine-phosphate synthase family. Mg(2+) serves as cofactor.

The enzyme catalyses 2-[(2R,5Z)-2-carboxy-4-methylthiazol-5(2H)-ylidene]ethyl phosphate + 4-amino-2-methyl-5-(diphosphooxymethyl)pyrimidine + 2 H(+) = thiamine phosphate + CO2 + diphosphate. It carries out the reaction 2-(2-carboxy-4-methylthiazol-5-yl)ethyl phosphate + 4-amino-2-methyl-5-(diphosphooxymethyl)pyrimidine + 2 H(+) = thiamine phosphate + CO2 + diphosphate. It catalyses the reaction 4-methyl-5-(2-phosphooxyethyl)-thiazole + 4-amino-2-methyl-5-(diphosphooxymethyl)pyrimidine + H(+) = thiamine phosphate + diphosphate. Its pathway is cofactor biosynthesis; thiamine diphosphate biosynthesis; thiamine phosphate from 4-amino-2-methyl-5-diphosphomethylpyrimidine and 4-methyl-5-(2-phosphoethyl)-thiazole: step 1/1. Its function is as follows. Condenses 4-methyl-5-(beta-hydroxyethyl)thiazole monophosphate (THZ-P) and 2-methyl-4-amino-5-hydroxymethyl pyrimidine pyrophosphate (HMP-PP) to form thiamine monophosphate (TMP). This is Thiamine-phosphate synthase from Campylobacter jejuni (strain RM1221).